Here is a 91-residue protein sequence, read N- to C-terminus: Small ribosomal subunit protein uS19 (91 aa).

It belongs to the universal ribosomal protein uS19 family.

In terms of biological role, protein S19 forms a complex with S13 that binds strongly to the 16S ribosomal RNA. In Lachnospira eligens (strain ATCC 27750 / DSM 3376 / VPI C15-48 / C15-B4) (Eubacterium eligens), this protein is Small ribosomal subunit protein uS19.